Reading from the N-terminus, the 371-residue chain is Glycosyltransferase 8 domain-containing protein 1 (371 aa).

The Cytoplasmic portion of the chain corresponds to 1–7 (MSFRKVN). Residues 8-28 (IIIWVLAVVLFLLVLHHNFLS) form a helical; Signal-anchor for type II membrane protein membrane-spanning segment. At 29–371 (LSSLLKNDIS…RRHMDTSNIK (343 aa)) the chain is on the lumenal side. Asn-257 carries an N-linked (GlcNAc...) asparagine glycan.

Belongs to the glycosyltransferase 8 family.

The protein localises to the membrane. This Mus musculus (Mouse) protein is Glycosyltransferase 8 domain-containing protein 1 (Glt8d1).